Reading from the N-terminus, the 295-residue chain is Protease HtpX homolog (295 aa).

The next 2 helical transmembrane spans lie at Ile6–Val26 and Leu40–Leu60. His148 is a binding site for Zn(2+). The active site involves Glu149. Position 152 (His152) interacts with Zn(2+). 2 consecutive transmembrane segments (helical) span residues Leu163–Leu183 and Ile198–Phe218. Glu223 provides a ligand contact to Zn(2+).

This sequence belongs to the peptidase M48B family. Zn(2+) is required as a cofactor.

The protein localises to the cell inner membrane. This is Protease HtpX homolog from Leptospira interrogans serogroup Icterohaemorrhagiae serovar copenhageni (strain Fiocruz L1-130).